Consider the following 785-residue polypeptide: Sexual differentiation process protein isp4 (785 aa).

The disordered stretch occupies residues Met-1 to Asp-28. Positions Ile-10 to Ser-26 are enriched in basic and acidic residues. A run of 16 helical transmembrane segments spans residues Met-94 to Leu-114, Leu-121 to Phe-141, Leu-167 to Ala-187, Phe-196 to Ala-216, Phe-264 to Gln-284, Leu-339 to Phe-359, Ala-413 to Tyr-433, Val-461 to Ile-481, Trp-490 to Val-510, Ala-512 to Tyr-532, Leu-537 to Ala-557, Ile-572 to Leu-592, Tyr-611 to Pro-631, Thr-642 to Trp-662, Gly-683 to Phe-703, and Leu-732 to Trp-752.

The protein belongs to the oligopeptide OPT transporter family.

The protein resides in the endoplasmic reticulum membrane. This Schizosaccharomyces pombe (strain 972 / ATCC 24843) (Fission yeast) protein is Sexual differentiation process protein isp4 (isp4).